The primary structure comprises 174 residues: Ribosome maturation factor RimM (174 aa).

Residues 97–169 (GNKFYFHEVI…KVVMDLPEGL (73 aa)) enclose the PRC barrel domain.

This sequence belongs to the RimM family. As to quaternary structure, binds ribosomal protein uS19.

The protein localises to the cytoplasm. Functionally, an accessory protein needed during the final step in the assembly of 30S ribosomal subunit, possibly for assembly of the head region. Essential for efficient processing of 16S rRNA. May be needed both before and after RbfA during the maturation of 16S rRNA. It has affinity for free ribosomal 30S subunits but not for 70S ribosomes. The chain is Ribosome maturation factor RimM from Flavobacterium psychrophilum (strain ATCC 49511 / DSM 21280 / CIP 103535 / JIP02/86).